Reading from the N-terminus, the 77-residue chain is Early E3 9.0 kDa glycoprotein (77 aa).

The N-linked (GlcNAc...) asparagine; by host glycan is linked to Asn7. The helical transmembrane segment at 27–47 threads the bilayer; it reads ITILIVIGILILSVILYFIFC.

This sequence belongs to the adenoviridae E3A-1 family.

It localises to the host nucleus membrane. The protein is Early E3 9.0 kDa glycoprotein of Human adenovirus B serotype 3 (HAdV-3).